Reading from the N-terminus, the 445-residue chain is Phosphoglucosamine mutase (445 aa).

The Phosphoserine intermediate role is filled by Ser-99. Ser-99, Asp-242, Asp-244, and Asp-246 together coordinate Mg(2+). At Ser-99 the chain carries Phosphoserine.

The protein belongs to the phosphohexose mutase family. Mg(2+) serves as cofactor. Activated by phosphorylation.

The enzyme catalyses alpha-D-glucosamine 1-phosphate = D-glucosamine 6-phosphate. In terms of biological role, catalyzes the conversion of glucosamine-6-phosphate to glucosamine-1-phosphate. The chain is Phosphoglucosamine mutase from Helicobacter pylori (strain Shi470).